The primary structure comprises 397 residues: Tryptophan synthase beta chain (397 aa).

An N6-(pyridoxal phosphate)lysine modification is found at K91.

This sequence belongs to the TrpB family. In terms of assembly, tetramer of two alpha and two beta chains. Pyridoxal 5'-phosphate serves as cofactor.

It carries out the reaction (1S,2R)-1-C-(indol-3-yl)glycerol 3-phosphate + L-serine = D-glyceraldehyde 3-phosphate + L-tryptophan + H2O. It functions in the pathway amino-acid biosynthesis; L-tryptophan biosynthesis; L-tryptophan from chorismate: step 5/5. In terms of biological role, the beta subunit is responsible for the synthesis of L-tryptophan from indole and L-serine. This is Tryptophan synthase beta chain from Bacillus cereus (strain AH187).